Consider the following 208-residue polypeptide: Cell death-inducing p53-target protein 1 (208 aa).

Pro residues-rich tracts occupy residues 1–13 and 36–67; these read MSSE…PGGP and MQPP…PGFI. Residues 1–71 form a disordered region; that stretch reads MSSEPPPPYP…PQPGFIPPHM (71 aa). In terms of domain architecture, LITAF spans 122–206; the sequence is ATTVTVLQGE…CKAYIYTYKR (85 aa). Zn(2+) contacts are provided by Cys142 and Cys145. Residues 164 to 184 form a membrane-binding amphipathic helix region; sequence LGFFCCFMGCDLGCCLIPCLI. Zn(2+) is bound by residues Cys194 and Cys197.

This sequence belongs to the CDIP1/LITAF family. As to expression, highly expressed in brain. Expressed at lower level in heart, skeletal muscle, kidney, pancreas and liver. Weakly or not expressed in placenta and lung.

The protein resides in the late endosome membrane. It localises to the lysosome membrane. Functionally, acts as an important p53/TP53-apoptotic effector. Regulates TNF-alpha-mediated apoptosis in a p53/TP53-dependent manner. This chain is Cell death-inducing p53-target protein 1 (CDIP1), found in Homo sapiens (Human).